Reading from the N-terminus, the 612-residue chain is Actin-binding LIM protein 2 (612 aa).

LIM zinc-binding domains follow at residues Ile-22 to Thr-81, Thr-81 to Gly-141, Arg-151 to Ile-210, and Ile-210 to Glu-270. Zn(2+) contacts are provided by Cys-83, Cys-86, His-103, Cys-106, Cys-109, Cys-112, Cys-131, and Cys-134. 8 residues coordinate Zn(2+): Cys-212, Cys-215, His-232, Cys-235, Cys-238, Cys-241, His-260, and Cys-263. Basic and acidic residues predominate over residues Thr-269–Thr-278. Disordered regions lie at residues Thr-269–Pro-295 and Ala-341–Tyr-433. Composition is skewed to low complexity over residues Ser-279–Pro-295 and Ser-364–Ser-373. 4 positions are modified to phosphoserine: Ser-282, Ser-294, Ser-365, and Ser-368. Residues Ser-394 to Gln-416 are compositionally biased toward polar residues. Ser-453 is modified (phosphoserine). The disordered stretch occupies residues Ala-471–Arg-520. Thr-473 bears the Phosphothreonine mark. Phosphoserine is present on residues Ser-477 and Ser-579. Over residues Ser-477–Ser-489 the composition is skewed to low complexity. Residues Thr-544–Phe-612 enclose the HP domain.

In terms of assembly, interacts with F-actin and ABRA.

It is found in the cytoplasm. May act as scaffold protein. May stimulate ABRA activity and ABRA-dependent SRF transcriptional activity. The chain is Actin-binding LIM protein 2 (Ablim2) from Rattus norvegicus (Rat).